We begin with the raw amino-acid sequence, 193 residues long: MTSKCSKWHEQPLINPLTNRKIKKNGPTYKELERECGPPPRRSSPRRSSPRRSPRRSSPRRSSPRRSSPRRSSPRRSNQRIQLYCGNNARDEGLINGTKTLGTRYQCLKKGIGKGLNEPILKYNNDYEPIENVRIYCGNGALPNNKDRFGTRDECLRKGFAVGQKQKYIRDGGIQRGPIVVEENGWYKAYLPR.

The disordered stretch occupies residues 1 to 84 (MTSKCSKWHE…RRSNQRIQLY (84 aa)). A compositionally biased stretch (basic residues) spans 43 to 78 (SSPRRSSPRRSPRRSSPRRSSPRRSSPRRSSPRRSN).

This sequence belongs to the IIV-6 378R family.

This is an uncharacterized protein from Invertebrate iridescent virus 6 (IIV-6).